Consider the following 601-residue polypeptide: NADH-quinone oxidoreductase subunit C/D (601 aa).

The segment at 1–191 (MKLTRDFPHN…DPFMLDAAKQ (191 aa)) is NADH dehydrogenase I subunit C. An NADH dehydrogenase I subunit D region spans residues 215–601 (DYMFLNLGPN…IDFVMSDVDR (387 aa)).

This sequence in the N-terminal section; belongs to the complex I 30 kDa subunit family. It in the C-terminal section; belongs to the complex I 49 kDa subunit family. NDH-1 is composed of 13 different subunits. Subunits NuoB, CD, E, F, and G constitute the peripheral sector of the complex.

The protein localises to the cell inner membrane. The enzyme catalyses a quinone + NADH + 5 H(+)(in) = a quinol + NAD(+) + 4 H(+)(out). Functionally, NDH-1 shuttles electrons from NADH, via FMN and iron-sulfur (Fe-S) centers, to quinones in the respiratory chain. The immediate electron acceptor for the enzyme in this species is believed to be ubiquinone. Couples the redox reaction to proton translocation (for every two electrons transferred, four hydrogen ions are translocated across the cytoplasmic membrane), and thus conserves the redox energy in a proton gradient. This is NADH-quinone oxidoreductase subunit C/D from Shewanella oneidensis (strain ATCC 700550 / JCM 31522 / CIP 106686 / LMG 19005 / NCIMB 14063 / MR-1).